A 394-amino-acid chain; its full sequence is p-hydroxybenzoate hydroxylase (394 aa).

Residues Ser13, Glu32, 42-47 (RIRAGV), and Gln102 each bind FAD. Substrate is bound by residues Tyr201, 212-214 (SQR), and Tyr222. Residue Asp286 coordinates FAD. Pro293 is a substrate binding site. Position 299-300 (299-300 (LN)) interacts with FAD.

This sequence belongs to the aromatic-ring hydroxylase family. Homodimer. FAD is required as a cofactor.

The catalysed reaction is 4-hydroxybenzoate + NADPH + O2 + H(+) = 3,4-dihydroxybenzoate + NADP(+) + H2O. Its pathway is aromatic compound metabolism; benzoate degradation via hydroxylation; 3,4-dihydroxybenzoate from benzoate: step 2/2. Catalyzes the incorporation of an atom of dioxygen into p-hydroxybenzoate (p-OHB) to form 3,4-dihydroxybenzoate (3,4DOHB). The reaction occurs in two parts: reduction of the flavin adenine dinucleotide (FAD) in the enzyme by reduced nicotinamide adenine dinucleotide phosphate (NADPH) in response to binding p-hydroxybenzoate to the enzyme and oxidation of reduced FAD with oxygen to form a hydroperoxide, which then oxygenates p-hydroxybenzoate. The protein is p-hydroxybenzoate hydroxylase (pobA) of Pseudomonas fluorescens.